We begin with the raw amino-acid sequence, 137 residues long: Large ribosomal subunit protein uL16c (137 aa).

Over residues 1–17 (MLSPKKTRFRRQHRGRM) the composition is skewed to basic residues. The interval 1–21 (MLSPKKTRFRRQHRGRMKGLS) is disordered.

It belongs to the universal ribosomal protein uL16 family. Part of the 50S ribosomal subunit.

The protein resides in the plastid. In Cuscuta obtusiflora (Peruvian dodder), this protein is Large ribosomal subunit protein uL16c.